Here is a 469-residue protein sequence, read N- to C-terminus: Ribulose bisphosphate carboxylase large chain (469 aa).

Positions 1 to 2 are excised as a propeptide; that stretch reads MS. The residue at position 3 (P3) is an N-acetylproline. K14 bears the N6,N6,N6-trimethyllysine mark. Positions 123 and 173 each coordinate substrate. The active-site Proton acceptor is the K175. K177 contributes to the substrate binding site. Mg(2+) contacts are provided by K201, D203, and E204. At K201 the chain carries N6-carboxylysine. Catalysis depends on H294, which acts as the Proton acceptor. Substrate-binding residues include R295, H327, and S379.

Belongs to the RuBisCO large chain family. Type I subfamily. As to quaternary structure, heterohexadecamer of 8 large chains and 8 small chains; disulfide-linked. The disulfide link is formed within the large subunit homodimers. The cofactor is Mg(2+). Post-translationally, the disulfide bond which can form in the large chain dimeric partners within the hexadecamer appears to be associated with oxidative stress and protein turnover.

The protein localises to the plastid. Its subcellular location is the chloroplast. It catalyses the reaction 2 (2R)-3-phosphoglycerate + 2 H(+) = D-ribulose 1,5-bisphosphate + CO2 + H2O. The enzyme catalyses D-ribulose 1,5-bisphosphate + O2 = 2-phosphoglycolate + (2R)-3-phosphoglycerate + 2 H(+). Its function is as follows. RuBisCO catalyzes two reactions: the carboxylation of D-ribulose 1,5-bisphosphate, the primary event in carbon dioxide fixation, as well as the oxidative fragmentation of the pentose substrate in the photorespiration process. Both reactions occur simultaneously and in competition at the same active site. The chain is Ribulose bisphosphate carboxylase large chain from Iris ensata (Japanese iris).